The following is a 2627-amino-acid chain: Telomerase protein component 1 (2627 aa).

TEP1 N-terminal repeat units lie at residues 1-30, 31-60, 61-90, and 91-120; these read MEKL…DLQP, LEKL…DLKT, MEKP…DLKT, and MEKP…SLKS. Disordered stretches follow at residues 193–214 and 383–402; these read FDSE…SLGE and RKHR…GMEP. In terms of domain architecture, TROVE spans 223–676; that stretch reads VKLTSGDSES…VKHSLPLLPG (454 aa). A compositionally biased stretch (basic residues) spans 383–395; the sequence is RKHRAKRHPRRPP. The region spanning 1162–1490 is the NACHT domain; the sequence is RLSLVTGQSG…PLERPGARLC (329 aa). 1168–1175 contributes to the ATP binding site; the sequence is GQSGQGKT. WD repeat units follow at residues 1411–1448, 1674–1713, 1716–1754, 1757–1796, 1798–1837, 1840–1879, 1882–1921, 1925–1964, 1967–2005, 2008–2047, 2059–2098, 2105–2143, 2146–2183, 2185–2233, 2236–2275, 2278–2317, 2319–2355, 2368–2417, and 2459–2500; these read VLPQ…TKSW, AVSS…EEKS, SGCD…RVLQ, AHQY…LAFQ, TYPK…VTKD, APGA…RLAA, AHHG…PRGH, LSLS…QGAQ, ALDV…LQSL, LSRF…RPHK, GHEG…TPVL, CHRD…RLGQ, GHQS…LTSI, AHSG…QTHT, GHSG…DDTC, RSSA…ATAQ, PGHI…GSAP, EDLG…PMIL, and NPSR…GEWT. The span at 2506 to 2522 shows a compositional bias: polar residues; the sequence is QKKANTPETQTPGTDPS. The segment at 2506 to 2551 is disordered; that stretch reads QKKANTPETQTPGTDPSTCRESDASMDSDASMDSEPTPHLKTRQRR. WD repeat units follow at residues 2553-2590 and 2592-2626; these read IHSG…LLGL and RCEG…FLNW.

As to quaternary structure, associated component of the telomerase holoenzyme complex. Component of the vault ribonucleoprotein particle, at least composed of MVP, PARP4 and one or more vault RNAs (vRNAs). Binds to VAULTRC1, VAULTRC2 and VAULTRC4/hvg4 vRNAs. As to expression, ubiquitous.

Its subcellular location is the nucleus. The protein resides in the chromosome. It is found in the telomere. In terms of biological role, component of the telomerase ribonucleoprotein complex that is essential for the replication of chromosome termini. Also a component of the ribonucleoprotein vaults particle, a multi-subunit structure involved in nucleo-cytoplasmic transport. Responsible for the localizing and stabilizing vault RNA (vRNA) association in the vault ribonucleoprotein particle. Binds to TERC. The polypeptide is Telomerase protein component 1 (TEP1) (Homo sapiens (Human)).